Here is a 638-residue protein sequence, read N- to C-terminus: Neuroendocrine convertase 2 (638 aa).

The N-terminal stretch at 1–25 is a signal peptide; that stretch reads MKGGCVSQWKAAAGLLFCVTVFASA. A propeptide spanning residues 26–109 is cleaved from the precursor; that stretch reads ERPVFTNHFL…QQEGFDRKKR (84 aa). Positions 129 to 453 constitute a Peptidase S8 domain; sequence QWYLINTGQA…YGVLDAGAMV (325 aa). Residues Asp167 and His208 each act as charge relay system in the active site. 2 cysteine pairs are disulfide-bonded: Cys225/Cys376 and Cys317/Cys347. Asn375 is a glycosylation site (N-linked (GlcNAc...) asparagine). Ser384 (charge relay system) is an active-site residue. The P/Homo B domain maps to 461 to 597; the sequence is TVPERFHCVG…TLMLHGSQSA (137 aa). Cys468 and Cys494 are joined by a disulfide. N-linked (GlcNAc...) asparagine glycans are attached at residues Asn514 and Asn524.

It belongs to the peptidase S8 family. Furin subfamily.

It is found in the cytoplasmic vesicle. The protein resides in the secretory vesicle. It localises to the secreted. It catalyses the reaction Release of protein hormones and neuropeptides from their precursors, generally by hydrolysis of -Lys-Arg-|- bonds.. Its function is as follows. Serine endopeptidase which is involved in the processing of hormone and other protein precursors at sites comprised of pairs of basic amino acid residues. Responsible for the release of glucagon from proglucagon in pancreatic A cells. In Sus scrofa (Pig), this protein is Neuroendocrine convertase 2 (PCSK2).